We begin with the raw amino-acid sequence, 2464 residues long: Highly reducing polyketide synthase xilA (2464 aa).

The 429-residue stretch at H9–H437 folds into the Ketosynthase family 3 (KS3) domain. Catalysis depends on for beta-ketoacyl synthase activity residues C182, H318, and H360. Over residues Q461–G487 the composition is skewed to low complexity. The tract at residues Q461–A495 is disordered. The region spanning F589–L911 is the Malonyl-CoA:ACP transacylase (MAT) domain. An N-terminal hotdog fold region spans residues H983–F1121. Residues H983–S1286 enclose the PKS/mFAS DH domain. H1015 functions as the Proton acceptor; for dehydratase activity in the catalytic mechanism. The C-terminal hotdog fold stretch occupies residues G1133–S1286. Catalysis depends on D1199, which acts as the Proton donor; for dehydratase activity. Residues N1282 to T1490 are methyltransferase (CMeT) domain. The 313-residue stretch at G1716–I2028 folds into the Enoyl reductase (ER) domain. One can recognise a Ketoreductase (KR) domain in the interval A2052–N2231. The region spanning E2383–A2461 is the Carrier domain. At S2420 the chain carries O-(pantetheine 4'-phosphoryl)serine.

Pantetheine 4'-phosphate is required as a cofactor.

The protein operates within secondary metabolite biosynthesis. Highly reducing polyketide synthase; part of the gene cluster that mediates the biosynthesis of the 6-methyl-2-pyrone derivative xylariolide D. XilA produces the 5-alkyl-6-methyl-2-pyrone backbone called prexylariolide D via sequential condensations of 4 malonyl-CoA units with one acetyl-CoA starter unit. During the biosynthesis, the linear polyketide chain is branched by the addition of an acetyl unit as the origin of the methyl group at the 2-pyrone ring. Prexylariolide D is then hydroxylated at the side chain by xilC to form the final product, xylariolide D. This chain is Highly reducing polyketide synthase xilA, found in Penicillium rubens (strain ATCC 28089 / DSM 1075 / NRRL 1951 / Wisconsin 54-1255) (Penicillium chrysogenum).